The sequence spans 192 residues: Large ribosomal subunit protein uL5 (192 aa).

This sequence belongs to the universal ribosomal protein uL5 family. Part of the 50S ribosomal subunit; part of the 5S rRNA/L5/L18/L25 subcomplex. Contacts the 5S rRNA and the P site tRNA. Forms a bridge to the 30S subunit in the 70S ribosome.

This is one of the proteins that bind and probably mediate the attachment of the 5S RNA into the large ribosomal subunit, where it forms part of the central protuberance. In the 70S ribosome it contacts protein S13 of the 30S subunit (bridge B1b), connecting the 2 subunits; this bridge is implicated in subunit movement. Contacts the P site tRNA; the 5S rRNA and some of its associated proteins might help stabilize positioning of ribosome-bound tRNAs. This is Large ribosomal subunit protein uL5 from Sphingopyxis alaskensis (strain DSM 13593 / LMG 18877 / RB2256) (Sphingomonas alaskensis).